Reading from the N-terminus, the 544-residue chain is Chaperonin GroEL (544 aa).

ATP contacts are provided by residues 30 to 33 (TLGP), Lys-51, 87 to 91 (DGTTT), Gly-415, and Asp-495.

The protein belongs to the chaperonin (HSP60) family. In terms of assembly, forms a cylinder of 14 subunits composed of two heptameric rings stacked back-to-back. Interacts with the co-chaperonin GroES.

The protein localises to the cytoplasm. The enzyme catalyses ATP + H2O + a folded polypeptide = ADP + phosphate + an unfolded polypeptide.. In terms of biological role, together with its co-chaperonin GroES, plays an essential role in assisting protein folding. The GroEL-GroES system forms a nano-cage that allows encapsulation of the non-native substrate proteins and provides a physical environment optimized to promote and accelerate protein folding. This chain is Chaperonin GroEL, found in Neisseria flavescens.